Consider the following 689-residue polypeptide: Elongation factor G (689 aa).

The 275-residue stretch at 9–283 folds into the tr-type G domain; that stretch reads AKFRNIGIMA…AIIEFMPSPL (275 aa). Residues 18 to 25, 82 to 86, and 136 to 139 each bind GTP; these read AHIDAGKT, DTPGH, and NKMD.

Belongs to the TRAFAC class translation factor GTPase superfamily. Classic translation factor GTPase family. EF-G/EF-2 subfamily.

It is found in the cytoplasm. Functionally, catalyzes the GTP-dependent ribosomal translocation step during translation elongation. During this step, the ribosome changes from the pre-translocational (PRE) to the post-translocational (POST) state as the newly formed A-site-bound peptidyl-tRNA and P-site-bound deacylated tRNA move to the P and E sites, respectively. Catalyzes the coordinated movement of the two tRNA molecules, the mRNA and conformational changes in the ribosome. This Clostridium botulinum (strain 657 / Type Ba4) protein is Elongation factor G.